The primary structure comprises 430 residues: Isocitrate dehydrogenase [NADP], mitochondrial (430 aa).

Residues 1–27 (MIRASAIQRTAMLLRQLRGFSTSATLA) constitute a mitochondrion transit peptide. Residues 101–103 (TIT) and R108 contribute to the NADP(+) site. T103 serves as a coordination point for substrate. Substrate contacts are provided by residues 120–126 (SPNGTIR), R135, and R158. D277 contacts Mn(2+). An NADP(+)-binding site is contributed by K285. Mn(2+) is bound at residue D300. Residues 335–340 (GTVTRH) and N353 each bind NADP(+).

Belongs to the isocitrate and isopropylmalate dehydrogenases family. In terms of assembly, homodimer. Requires Mg(2+) as cofactor. The cofactor is Mn(2+).

The protein resides in the mitochondrion. It carries out the reaction D-threo-isocitrate + NADP(+) = 2-oxoglutarate + CO2 + NADPH. Its function is as follows. Mitochondrial IDP1 may regulate flux through the tricarboxylic acid cycle and respiration. Its probably critical function is the production of NADPH. The polypeptide is Isocitrate dehydrogenase [NADP], mitochondrial (IDP1) (Candida tropicalis (Yeast)).